The chain runs to 487 residues: L-tartrate/succinate antiporter (487 aa).

14 consecutive transmembrane segments (helical) span residues 10-30 (YLAP…AGLE), 33-53 (TWLY…EPVP), 54-74 (GAVV…WLLF), 93-113 (WAVS…FMFG), 137-157 (TLFL…VTPS), 189-209 (IGSY…AIFL), 236-256 (FLGM…LAYV), 292-312 (LMVG…AAMV), 313-333 (GYSV…DIVS), 340-360 (VFFW…TGFI), 370-390 (SLSG…FYLL), 393-413 (FFAS…AAAL), 418-438 (IPLP…SILT), and 465-485 (IFGL…MPVV).

The protein belongs to the SLC13A/DASS transporter (TC 2.A.47) family. DIT1 subfamily.

It is found in the cell inner membrane. It catalyses the reaction (2R,3R)-tartrate(out) + succinate(in) = (2R,3R)-tartrate(in) + succinate(out). In terms of biological role, catalyzes the uptake of tartrate in exchange for intracellular succinate. Essential for anaerobic L-tartrate fermentation. The sequence is that of L-tartrate/succinate antiporter (ttdT) from Escherichia coli O6:K15:H31 (strain 536 / UPEC).